The following is a 220-amino-acid chain: Large ribosomal subunit protein uL6c (220 aa).

A chloroplast-targeting transit peptide spans Met-1–Cys-38.

Component of the chloroplast large ribosomal subunit (LSU). Mature 70S chloroplast ribosomes of higher plants consist of a small (30S) and a large (50S) subunit. The 30S small subunit contains 1 molecule of ribosomal RNA (16S rRNA) and 24 different proteins. The 50S large subunit contains 3 rRNA molecules (23S, 5S and 4.5S rRNA) and 33 different proteins.

The protein localises to the plastid. It localises to the chloroplast. In terms of biological role, component of the chloroplast ribosome (chloro-ribosome), a dedicated translation machinery responsible for the synthesis of chloroplast genome-encoded proteins, including proteins of the transcription and translation machinery and components of the photosynthetic apparatus. This is Large ribosomal subunit protein uL6c (RPL6) from Spinacia oleracea (Spinach).